The primary structure comprises 203 residues: A-type ATP synthase subunit E (203 aa).

This sequence belongs to the V-ATPase E subunit family. As to quaternary structure, has multiple subunits with at least A(3), B(3), C, D, E, F, H, I and proteolipid K(x).

It localises to the cell membrane. Its function is as follows. Component of the A-type ATP synthase that produces ATP from ADP in the presence of a proton gradient across the membrane. The protein is A-type ATP synthase subunit E of Thermococcus kodakarensis (strain ATCC BAA-918 / JCM 12380 / KOD1) (Pyrococcus kodakaraensis (strain KOD1)).